Reading from the N-terminus, the 445-residue chain is Phosphoglucosamine mutase 1 (445 aa).

S102 acts as the Phosphoserine intermediate in catalysis. Positions 102, 241, 243, and 245 each coordinate Mg(2+). S102 bears the Phosphoserine mark.

The protein belongs to the phosphohexose mutase family. Mg(2+) is required as a cofactor. Activated by phosphorylation.

It catalyses the reaction alpha-D-glucosamine 1-phosphate = D-glucosamine 6-phosphate. Catalyzes the conversion of glucosamine-6-phosphate to glucosamine-1-phosphate. The polypeptide is Phosphoglucosamine mutase 1 (Shewanella amazonensis (strain ATCC BAA-1098 / SB2B)).